The chain runs to 362 residues: 3-dehydroquinate synthase (362 aa).

NAD(+) is bound by residues Asp71–Lys76, Gly105–Asp109, Thr129–Thr130, Lys142, Lys151, and Cys169–Thr172. 3 residues coordinate Zn(2+): Glu184, His247, and His264.

The protein belongs to the sugar phosphate cyclases superfamily. Dehydroquinate synthase family. Requires NAD(+) as cofactor. Co(2+) is required as a cofactor. The cofactor is Zn(2+).

The protein resides in the cytoplasm. The catalysed reaction is 7-phospho-2-dehydro-3-deoxy-D-arabino-heptonate = 3-dehydroquinate + phosphate. The protein operates within metabolic intermediate biosynthesis; chorismate biosynthesis; chorismate from D-erythrose 4-phosphate and phosphoenolpyruvate: step 2/7. Functionally, catalyzes the conversion of 3-deoxy-D-arabino-heptulosonate 7-phosphate (DAHP) to dehydroquinate (DHQ). In Escherichia coli O157:H7, this protein is 3-dehydroquinate synthase.